The chain runs to 399 residues: O-antigen polymerase (399 aa).

10 consecutive transmembrane segments (helical) span residues 4–24 (FPPGAILRDVLNVFFVALVLV), 37–57 (LVFTIFSWSAVILWVIALTIF), 64–84 (AIMGGRSYILFPAVFIALVIL), 97–117 (IVCYIIFLMFMVATISIIDVL), 151–171 (GGFSDALNFGYMLTLGVLLCM), 185–205 (IISFVLFIAICMSLTRGAILV), 222–242 (FCGITLFVIIIPVLAISTNIF), 309–329 (FFWIALETGIIGLIINIIYLA), 353–373 (LYFLFGSIYFISAALSSAPSS), and 374–394 (STFSIYYWTVLALIPFLKLTN).

It localises to the cell inner membrane. It carries out the reaction n lipid-linked O-antigen repeat units = a lipid-linked O antigen + (n-1) polyisoprenyl diphosphate.. It participates in bacterial outer membrane biogenesis; LPS O-antigen biosynthesis. Functionally, polymerase involved in the biosynthesis of the lipopolysaccharide (LPS). Catalyzes the polymerization of the O-antigen repeat units on the periplasmic face of the inner membrane, leading to the formation of the lipid-linked O-antigen molecule. This Salmonella muenchen protein is O-antigen polymerase.